Consider the following 485-residue polypeptide: Alpha-amylase (485 aa).

Positions 1-18 are cleaved as a signal peptide; that stretch reads MQHLSILLVVLGSSIAFA. Glutamine 19 is modified (pyrrolidone carboxylic acid). Cysteine 46 and cysteine 102 are oxidised to a cystine. Ca(2+)-binding residues include asparagine 116, arginine 163, and aspartate 172. Cysteine 152 and cysteine 165 form a disulfide bridge. Arginine 200 lines the chloride pocket. Aspartate 202 serves as the catalytic Nucleophile. Histidine 206 lines the Ca(2+) pocket. Glutamate 238 (proton donor) is an active-site residue. Asparagine 301 serves as a coordination point for chloride. A disulfide bond links cysteine 369 and cysteine 375. 2 N-linked (GlcNAc...) asparagine glycosylation sites follow: asparagine 423 and asparagine 449. Cysteine 440 and cysteine 452 are oxidised to a cystine.

The protein belongs to the glycosyl hydrolase 13 family. As to quaternary structure, monomer. Requires Ca(2+) as cofactor. The cofactor is chloride.

The catalysed reaction is Endohydrolysis of (1-&gt;4)-alpha-D-glucosidic linkages in polysaccharides containing three or more (1-&gt;4)-alpha-linked D-glucose units.. Functionally, involved in the digestion of starch. The chain is Alpha-amylase from Hypothenemus hampei (Coffee berry borer).